A 519-amino-acid polypeptide reads, in one-letter code: Pleckstrin homology domain-containing family A member 8 (519 aa).

The PH domain maps to methionine 1–alanine 93. Threonine 139 carries the phosphothreonine modification. Serine 145 carries the post-translational modification Phosphoserine. Residue threonine 153 is modified to Phosphothreonine. A glycolipid transfer protein homology domain region spans residues threonine 310–valine 519.

Homodimer. Interacts with ARF1; the interaction together with phosphatidylinositol 4-phosphate binding is required for FAPP2 GlcCer transfer ability. As to expression, expressed in kidney cell lines.

It is found in the golgi apparatus. It localises to the trans-Golgi network membrane. The protein resides in the membrane. Functionally, cargo transport protein that is required for apical transport from the Golgi complex. Transports AQP2 from the trans-Golgi network (TGN) to sites of AQP2 phosphorylation. Mediates the non-vesicular transport of glucosylceramide (GlcCer) from the trans-Golgi network (TGN) to the plasma membrane and plays a pivotal role in the synthesis of complex glycosphingolipids. Binding of both phosphatidylinositol 4-phosphate (PIP) and ARF1 are essential for the GlcCer transfer ability. Also required for primary cilium formation, possibly by being involved in the transport of raft lipids to the apical membrane, and for membrane tubulation. This Homo sapiens (Human) protein is Pleckstrin homology domain-containing family A member 8 (PLEKHA8).